Reading from the N-terminus, the 510-residue chain is Cytochrome c-552 (510 aa).

The first 50 residues, Met-1–Ala-50, serve as a signal peptide directing secretion. His-124 is a heme c binding site. Heme-binding residues include Cys-152, Cys-155, and Lys-156. Residues Cys-190, Cys-193, His-194, Cys-239, Cys-242, and His-243 each coordinate heme c. Residues Glu-245, Tyr-246, Lys-291, and Gln-293 each coordinate Ca(2+). Tyr-246 is a substrate binding site. His-294 lines the substrate pocket. Heme c is bound by residues His-305, Cys-312, Cys-315, His-316, His-331, Cys-344, Cys-347, His-348, and His-423.

It belongs to the cytochrome c-552 family. Requires Ca(2+) as cofactor. It depends on heme c as a cofactor.

Its subcellular location is the periplasm. It carries out the reaction 6 Fe(III)-[cytochrome c] + NH4(+) + 2 H2O = 6 Fe(II)-[cytochrome c] + nitrite + 8 H(+). Its pathway is nitrogen metabolism; nitrate reduction (assimilation). Catalyzes the reduction of nitrite to ammonia, consuming six electrons in the process. The protein is Cytochrome c-552 of Pasteurella multocida (strain Pm70).